Consider the following 206-residue polypeptide: KH domain-containing protein 3 (206 aa).

The interval 1–40 is involved in RNA binding; that stretch reads MDTPRRFPTLVQLMQPKAMPVEVLGHLPKRFSWFHSEFLK. The region spanning 40 to 103 is the KH; atypical domain; the sequence is KNPKVVRLEV…SYQEDTIKMI (64 aa). Basic and acidic residues predominate over residues 144–153; the sequence is GTQRSVEVRE. The segment at 144–206 is disordered; the sequence is GTQRSVEVRE…EDTRAPVTRL (63 aa). Position 145 is a phosphothreonine (Thr-145). The segment covering 166–183 has biased composition (polar residues); sequence TGTQQSLEAANQSGTQRS. Ser-171 is modified (phosphoserine).

It belongs to the KHDC1 family. In terms of assembly, component of the subcortical maternal complex (SCMC), at least composed of NLRP5, KHDC3L, OOEP, and TLE6. Within the complex, interacts with NLRP5, KHDC3L and TLE6. The SCMC may facilitate translocation of its components between the nuclear and cytoplasmic compartments. Forms a scaffold complex with OOEP/FLOPED, and interacts with BLM and TRIM25 at DNA replication forks. Interacts with PARP1; the interaction is increased following the formation of DNA double-strand breaks. Interacts with NUMA1.

The protein localises to the cytoplasm. It is found in the cell cortex. Its subcellular location is the nucleus. It localises to the mitochondrion. The protein resides in the cytoskeleton. The protein localises to the microtubule organizing center. It is found in the centrosome. Its subcellular location is the chromosome. Functionally, component of the subcortical maternal complex (SCMC), a multiprotein complex that plays a key role in early embryonic development. The SCMC complex is a structural constituent of cytoplasmic lattices, which consist in fibrous structures found in the cytoplasm of oocytes and preimplantation embryos. They are required to store maternal proteins critical for embryonic development, such as proteins that control epigenetic reprogramming of the preimplantation embryo, and prevent their degradation or activation. KHDC3 ensures proper spindle assembly by regulating the localization of AURKA via RHOA signaling and of PLK1 via a RHOA-independent process. Required for the localization of MAD2L1 to kinetochores to enable spindle assembly checkpoint function. As part of the OOEP-KHDC3 scaffold, recruits BLM and TRIM25 to DNA replication forks, thereby promoting the ubiquitination of BLM by TRIM25, enhancing BLM retainment at replication forks and therefore promoting stalled replication fork restart. Regulates homologous recombination-mediated DNA repair via recruitment of RAD51 to sites of DNA double-strand breaks, and sustainment of PARP1 activity, which in turn modulates downstream ATM or ATR activation. Activation of ATM or ATR in response to DNA double-strand breaks may be cell-type specific. Its role in DNA double-strand break repair is independent of its role in restarting stalled replication forks. Promotes neural stem cell neurogenesis and neuronal differentiation in the hippocampus. May regulate normal development of learning, memory and anxiety. Capable of binding RNA. The sequence is that of KH domain-containing protein 3 (KHDC3L) from Macaca mulatta (Rhesus macaque).